A 484-amino-acid polypeptide reads, in one-letter code: UDP-N-acetylmuramate--L-alanine ligase (484 aa).

123–129 (GTHGKTT) is a binding site for ATP.

This sequence belongs to the MurCDEF family.

Its subcellular location is the cytoplasm. The enzyme catalyses UDP-N-acetyl-alpha-D-muramate + L-alanine + ATP = UDP-N-acetyl-alpha-D-muramoyl-L-alanine + ADP + phosphate + H(+). It participates in cell wall biogenesis; peptidoglycan biosynthesis. Its function is as follows. Cell wall formation. This Pseudomonas fluorescens (strain ATCC BAA-477 / NRRL B-23932 / Pf-5) protein is UDP-N-acetylmuramate--L-alanine ligase.